The chain runs to 59 residues: Protein translocase subunit SecE (59 aa).

The helical transmembrane segment at 30–50 (ITVISTVIFFVIFFALLDTGI) threads the bilayer.

This sequence belongs to the SecE/SEC61-gamma family. Component of the Sec protein translocase complex. Heterotrimer consisting of SecY, SecE and SecG subunits. The heterotrimers can form oligomers, although 1 heterotrimer is thought to be able to translocate proteins. Interacts with the ribosome. Interacts with SecDF, and other proteins may be involved. Interacts with SecA.

Its subcellular location is the cell membrane. Essential subunit of the Sec protein translocation channel SecYEG. Clamps together the 2 halves of SecY. May contact the channel plug during translocation. The protein is Protein translocase subunit SecE of Bacillus subtilis (strain 168).